The chain runs to 293 residues: Pantothenate synthetase (293 aa).

30–37 (MGNLHEGH) contributes to the ATP binding site. The Proton donor role is filled by His37. Residue Gln61 participates in (R)-pantoate binding. Gln61 is a beta-alanine binding site. 149 to 152 (GEKD) lines the ATP pocket. Gln155 serves as a coordination point for (R)-pantoate. Residues Val178 and 186-189 (MSSR) each bind ATP.

This sequence belongs to the pantothenate synthetase family. In terms of assembly, homodimer.

The protein resides in the cytoplasm. The enzyme catalyses (R)-pantoate + beta-alanine + ATP = (R)-pantothenate + AMP + diphosphate + H(+). It functions in the pathway cofactor biosynthesis; (R)-pantothenate biosynthesis; (R)-pantothenate from (R)-pantoate and beta-alanine: step 1/1. In terms of biological role, catalyzes the condensation of pantoate with beta-alanine in an ATP-dependent reaction via a pantoyl-adenylate intermediate. The protein is Pantothenate synthetase of Vibrio cholerae serotype O1 (strain ATCC 39541 / Classical Ogawa 395 / O395).